Reading from the N-terminus, the 213-residue chain is uncharacterized protein (213 aa).

This is an uncharacterized protein from Acanthamoeba polyphaga mimivirus (APMV).